A 317-amino-acid polypeptide reads, in one-letter code: Malate dehydrogenase (317 aa).

Residues Gly-15 to Gly-20 and Asp-39 each bind NAD(+). Residues Arg-88 and Arg-94 each contribute to the substrate site. NAD(+) contacts are provided by residues Asn-101 and Val-124–Asn-126. Residues Asn-126 and Arg-157 each coordinate substrate. The Proton acceptor role is filled by His-181.

It belongs to the LDH/MDH superfamily. MDH type 3 family.

It catalyses the reaction (S)-malate + NAD(+) = oxaloacetate + NADH + H(+). In terms of biological role, catalyzes the reversible oxidation of malate to oxaloacetate. The sequence is that of Malate dehydrogenase from Ehrlichia ruminantium (strain Gardel).